A 171-amino-acid polypeptide reads, in one-letter code: Co-chaperone protein HscB homolog (171 aa).

The region spanning 2-74 is the J domain; it reads NHFELFGLPL…ISRAEYLLVQ (73 aa).

It belongs to the HscB family. Interacts with HscA and stimulates its ATPase activity.

Its function is as follows. Co-chaperone involved in the maturation of iron-sulfur cluster-containing proteins. Seems to help targeting proteins to be folded toward HscA. This chain is Co-chaperone protein HscB homolog, found in Vibrio atlanticus (strain LGP32) (Vibrio splendidus (strain Mel32)).